A 103-amino-acid polypeptide reads, in one-letter code: Carboxysome shell protein CsoS1 (103 aa).

A BMC domain is found at 9–94 (ALGMIETRGL…PHREVEPALG (86 aa)).

It belongs to the bacterial microcompartments protein family. CsoS1 subfamily. As to quaternary structure, homohexamer with a small central pore. Forms a CsoS2-CsoS1-RuBisCO complex.

Its subcellular location is the carboxysome. Its function is as follows. One of the shell proteins of the carboxysome, a polyhedral inclusion where RuBisCO (ribulose bisphosphate carboxylase, ccbL-ccbS) is sequestered. Assembles into hexamers which make sheets that form the facets of the polyhedral carboxysome. This is Carboxysome shell protein CsoS1 from Prochlorococcus marinus (strain MIT 9313).